A 144-amino-acid polypeptide reads, in one-letter code: D-aminoacyl-tRNA deacylase (144 aa).

Residues 136–137 (GP) carry the Gly-cisPro motif, important for rejection of L-amino acids motif.

Belongs to the DTD family. In terms of assembly, homodimer.

The protein resides in the cytoplasm. It carries out the reaction glycyl-tRNA(Ala) + H2O = tRNA(Ala) + glycine + H(+). The catalysed reaction is a D-aminoacyl-tRNA + H2O = a tRNA + a D-alpha-amino acid + H(+). Its function is as follows. An aminoacyl-tRNA editing enzyme that deacylates mischarged D-aminoacyl-tRNAs. Also deacylates mischarged glycyl-tRNA(Ala), protecting cells against glycine mischarging by AlaRS. Acts via tRNA-based rather than protein-based catalysis; rejects L-amino acids rather than detecting D-amino acids in the active site. By recycling D-aminoacyl-tRNA to D-amino acids and free tRNA molecules, this enzyme counteracts the toxicity associated with the formation of D-aminoacyl-tRNA entities in vivo and helps enforce protein L-homochirality. This is D-aminoacyl-tRNA deacylase from Vibrio vulnificus (strain CMCP6).